A 166-amino-acid polypeptide reads, in one-letter code: Probable chemoreceptor glutamine deamidase CheD (166 aa).

It belongs to the CheD family.

It catalyses the reaction L-glutaminyl-[protein] + H2O = L-glutamyl-[protein] + NH4(+). Probably deamidates glutamine residues to glutamate on methyl-accepting chemotaxis receptors (MCPs), playing an important role in chemotaxis. This chain is Probable chemoreceptor glutamine deamidase CheD, found in Oceanobacillus iheyensis (strain DSM 14371 / CIP 107618 / JCM 11309 / KCTC 3954 / HTE831).